The following is a 1047-amino-acid chain: [F-actin]-monooxygenase MICAL1 (1047 aa).

Residues 1–489 (MASPTSTNPA…QDLYDIMDKE (489 aa)) form a monooxygenase domain region. Residues Cys95, 114–116 (EKR), 121–123 (RHN), Phe181, Tyr293, and Asp393 each bind FAD. Position 475 is a phosphothreonine (Thr475). Positions 507–611 (SAGTEELLHW…YLSHFHSAFK (105 aa)) constitute a Calponin-homology (CH) domain. Ser616 is modified (phosphoserine). Positions 644–672 (RTKVEEETPCTEEPPVSEPSVPPALPSEH) are disordered. Over residues 659–668 (VSEPSVPPAL) the composition is skewed to pro residues. Residues 679-741 (DVCELCGKRL…LQHLPQEDQK (63 aa)) form the LIM zinc-binding domain. The Zn(2+) site is built by Cys681, Cys684, His702, Cys705, Cys708, Cys711, Cys731, and His734. Disordered stretches follow at residues 739 to 787 (DQKE…QPAR) and 849 to 872 (EKGE…PPPL). Residues 745 to 767 (NNGSPENQELPTPGDSTTQSGPS) are compositionally biased toward polar residues. A phosphoserine mark is found at Ser777 and Ser781. Over residues 851–868 (GEEEEEEEEEEEEEEEEL) the composition is skewed to acidic residues. In terms of domain architecture, bMERB spans 905–1047 (KEEEMKRFCK…EERRLREMPV (143 aa)). A coiled-coil region spans residues 912-996 (FCKAQAIQRR…LEEKQRQLDH (85 aa)).

Belongs to the Mical family. In terms of assembly, interacts with STK38 and STK38L. Associates with the SH3 domain of NEDD9. Interacts with VIM and PLXNA3. Interacts with RAB1B, RAB8A, RAB10, RAB13 and RAB15 (in their GTP-bound forms); binding to RAB1B is of low affinity compared to other Rab proteins; at least in case of RAB8A and RAB10 can bind 2 molecules of the Rab proteins simultaneously. Interacts with GRAF1/ARHGAP26, GRAF2/ARHGAP10, RAB8A, RAB8B and RAB10; may bind simultaneously to GRAFs and Rabs and connects GRAFs to Rabs. Does not interact with RAB1 and RAB11A. It depends on FAD as a cofactor.

Its subcellular location is the cytoplasm. The protein resides in the cytoskeleton. It is found in the endosome membrane. It localises to the midbody. The catalysed reaction is L-methionyl-[F-actin] + NADPH + O2 + H(+) = L-methionyl-(R)-S-oxide-[F-actin] + NADP(+) + H2O. It catalyses the reaction NADPH + O2 + H(+) = H2O2 + NADP(+). Functionally, monooxygenase that promotes depolymerization of F-actin by mediating oxidation of specific methionine residues on actin to form methionine-sulfoxide, resulting in actin filament disassembly and preventing repolymerization. In the absence of actin, it also functions as a NADPH oxidase producing H(2)O(2). Acts as a cytoskeletal regulator that connects NEDD9 to intermediate filaments. Also acts as a negative regulator of apoptosis via its interaction with STK38 and STK38L; acts by antagonizing STK38 and STK38L activation by MST1/STK4. Involved in regulation of lamina-specific connectivity in the nervous system such as the development of lamina-restricted hippocampal connections. Through redox regulation of the actin cytoskeleton controls the intracellular distribution of secretory vesicles containing L1/neurofascin/NgCAM family proteins in neurons, thereby regulating their cell surface levels. May act as Rab effector protein and play a role in vesicle trafficking. Promotes endosomal tubule extension by associating with RAB8 (RAB8A or RAB8B), RAB10 and GRAF (GRAF1/ARHGAP26 or GRAF2/ARHGAP10) on the endosomal membrane which may connect GRAFs to Rabs, thereby participating in neosynthesized Rab8-Rab10-Rab11-dependent protein export. The protein is [F-actin]-monooxygenase MICAL1 (Mical1) of Rattus norvegicus (Rat).